The primary structure comprises 49 residues: Large ribosomal subunit protein bL33B (49 aa).

This sequence belongs to the bacterial ribosomal protein bL33 family.

This chain is Large ribosomal subunit protein bL33B, found in Limosilactobacillus reuteri subsp. reuteri (strain JCM 1112) (Lactobacillus reuteri).